A 243-amino-acid chain; its full sequence is UTP--glucose-1-phosphate uridylyltransferase AglF (243 aa).

The protein belongs to the UDPGP type 2 family.

The enzyme catalyses alpha-D-glucose 1-phosphate + UTP + H(+) = UDP-alpha-D-glucose + diphosphate. Its pathway is cell surface structure biogenesis; S-layer biogenesis. In terms of biological role, involved in the assembly of a N-linked pentasaccharide that decorates the S-layer glycoprotein and flagellins. Involved in the biosynthesis of the hexuronic acid found at position 3 of the pentasaccharide. This is UTP--glucose-1-phosphate uridylyltransferase AglF (aglF) from Haloferax volcanii (strain ATCC 29605 / DSM 3757 / JCM 8879 / NBRC 14742 / NCIMB 2012 / VKM B-1768 / DS2) (Halobacterium volcanii).